A 305-amino-acid chain; its full sequence is Porphobilinogen deaminase (305 aa).

Position 238 is an S-(dipyrrolylmethanemethyl)cysteine (cysteine 238).

Belongs to the HMBS family. Monomer. The cofactor is dipyrromethane.

The enzyme catalyses 4 porphobilinogen + H2O = hydroxymethylbilane + 4 NH4(+). The protein operates within porphyrin-containing compound metabolism; protoporphyrin-IX biosynthesis; coproporphyrinogen-III from 5-aminolevulinate: step 2/4. Functionally, tetrapolymerization of the monopyrrole PBG into the hydroxymethylbilane pre-uroporphyrinogen in several discrete steps. The polypeptide is Porphobilinogen deaminase (Rubrobacter xylanophilus (strain DSM 9941 / JCM 11954 / NBRC 16129 / PRD-1)).